Reading from the N-terminus, the 205-residue chain is Small ribosomal subunit protein uS4 (205 aa).

A compositionally biased stretch (basic and acidic residues) spans 1-16; the sequence is MSKRESSKYKIDRRMG. A disordered region spans residues 1–46; it reads MSKRESSKYKIDRRMGENIWGRPKSPVNRREYGPGQHGQRRKGKLS. The S4 RNA-binding domain occupies 94–157; that stretch reads SRLDAIVYRA…KQLVIVLESV (64 aa).

This sequence belongs to the universal ribosomal protein uS4 family. Part of the 30S ribosomal subunit. Contacts protein S5. The interaction surface between S4 and S5 is involved in control of translational fidelity.

One of the primary rRNA binding proteins, it binds directly to 16S rRNA where it nucleates assembly of the body of the 30S subunit. In terms of biological role, with S5 and S12 plays an important role in translational accuracy. This Rhizobium rhizogenes (strain K84 / ATCC BAA-868) (Agrobacterium radiobacter) protein is Small ribosomal subunit protein uS4.